We begin with the raw amino-acid sequence, 305 residues long: Oligopeptide transport ATP-binding protein OppF (305 aa).

The ABC transporter domain occupies 6 to 251 (LEIKHLKQHF…PLHPYTKSLL (246 aa)). ATP is bound at residue 42 to 49 (GESGCGKS).

Belongs to the ABC transporter superfamily. In terms of assembly, the complex is composed of two ATP-binding proteins (OppD and OppF), two transmembrane proteins (OppB and OppC) and a solute-binding protein (OppA).

Its subcellular location is the cell membrane. The catalysed reaction is a [peptide](out) + ATP + H2O = a [peptide](in) + ADP + phosphate + H(+). Part of the ABC transporter complex OppABCDF involved in the uptake of oligopeptides. Probably responsible for energy coupling to the transport system. Required for genetic competence but not for peptide transport or for sporulation. The protein is Oligopeptide transport ATP-binding protein OppF of Bacillus subtilis (strain 168).